The following is a 348-amino-acid chain: Zinc-type alcohol dehydrogenase-like protein C2E1P3.01 (348 aa).

The protein belongs to the zinc-containing alcohol dehydrogenase family. Quinone oxidoreductase subfamily.

The protein localises to the mitochondrion. In Schizosaccharomyces pombe (strain 972 / ATCC 24843) (Fission yeast), this protein is Zinc-type alcohol dehydrogenase-like protein C2E1P3.01.